Reading from the N-terminus, the 208-residue chain is Small ribosomal subunit protein uS4 (208 aa).

Residues 97-160 (SRLDNIVFRL…KKNDKIAEAL (64 aa)) form the S4 RNA-binding domain.

The protein belongs to the universal ribosomal protein uS4 family. Part of the 30S ribosomal subunit. Contacts protein S5. The interaction surface between S4 and S5 is involved in control of translational fidelity.

Its function is as follows. One of the primary rRNA binding proteins, it binds directly to 16S rRNA where it nucleates assembly of the body of the 30S subunit. In terms of biological role, with S5 and S12 plays an important role in translational accuracy. The sequence is that of Small ribosomal subunit protein uS4 from Mesoplasma florum (strain ATCC 33453 / NBRC 100688 / NCTC 11704 / L1) (Acholeplasma florum).